The primary structure comprises 312 residues: Homoserine O-acetyltransferase (312 aa).

Catalysis depends on C142, which acts as the Acyl-thioester intermediate. Substrate is bound by residues K163 and S192. H235 serves as the catalytic Proton acceptor. E237 is a catalytic residue. Residue R249 participates in substrate binding.

Belongs to the MetA family.

The protein resides in the cytoplasm. The enzyme catalyses L-homoserine + acetyl-CoA = O-acetyl-L-homoserine + CoA. The protein operates within amino-acid biosynthesis; L-methionine biosynthesis via de novo pathway; O-acetyl-L-homoserine from L-homoserine: step 1/1. Transfers an acetyl group from acetyl-CoA to L-homoserine, forming acetyl-L-homoserine. In Ruegeria pomeroyi (strain ATCC 700808 / DSM 15171 / DSS-3) (Silicibacter pomeroyi), this protein is Homoserine O-acetyltransferase.